The chain runs to 645 residues: Nucleolar GTP-binding protein 1 (645 aa).

In terms of domain architecture, OBG-type G spans Arg-168–Leu-340. GTP-binding positions include Gly-174 to Ser-181, Asp-220 to Ile-224, and Asn-288 to Asp-291. The interval Gly-567–Arg-645 is disordered. Residues Asn-612 to Ala-624 show a composition bias toward basic and acidic residues.

Belongs to the TRAFAC class OBG-HflX-like GTPase superfamily. OBG GTPase family. NOG subfamily.

The protein localises to the nucleus. Its subcellular location is the nucleolus. Functionally, involved in the biogenesis of the 60S ribosomal subunit. This chain is Nucleolar GTP-binding protein 1 (NOG1), found in Candida glabrata (strain ATCC 2001 / BCRC 20586 / JCM 3761 / NBRC 0622 / NRRL Y-65 / CBS 138) (Yeast).